The chain runs to 58 residues: Proteinase inhibitor PSKP-1 (58 aa).

The region spanning 1-58 is the Kazal-like domain; the sequence is VIEPKCYKYEGKKCPPDINPVCGTDKRTYYNECALCVFIRQSTKKADKAIKIKKWGKC. Intrachain disulfides connect Cys-6/Cys-36, Cys-14/Cys-33, and Cys-22/Cys-58.

Monomer. As to expression, skin.

It localises to the secreted. Its function is as follows. Has antibacterial activity against Gram-negative bacterium E.coli ATCC 11229. Shows hemagglutinating activity. Inhibits prolyl endopeptidase, but not trypsin, chymotrypsin, V8 protease and proteinase K. May have a role in mucosal defense against microbes by interacting directly with their membranes. In Phyllomedusa sauvagei (Sauvage's leaf frog), this protein is Proteinase inhibitor PSKP-1.